The sequence spans 594 residues: MADLLSSLKNLSNGSGVYQYFDKNRQLLYIGKAKNLKKRIKSYFSIHNNEITPNHRTSLRIQMMVKQIAFLETILVENEQDALILENSLIKQLKPKYNILLRDDKTYPYIYMDFSTDFPIPLITRKILKQLGVKYFGPFTSGAKDILDSLYELLPLVQKKNCIKDKKACMFYQIERCKAPCENKITKEEYLKIAKECLEMIENKDKLIKELQLKMDRLSSNLRFEEALIYRDRISKIQKIAPFTCMDLAKLYDLDIFAFYGKNNRAVLVKMFMRGGKIISSAFEKIHSLNGFDADEAMKQAIINHYQSHLPLMPEQILLNACSNETLKELQEFIYHKHSKKITLNIPKKGDKLALIEIAMKNAQEIFSQEKTSNEEEILEEVRSLLNLECVPYRVEIFDTSHHANSQCVGGMVVYENSAFQKNSYRRYHLKGSNEYAQMSELLTRRALDFAKEPPPNLWVIDGGRVQLNIALETLKSSGSFVEVIAISKEKRDSKAYRSKGGAKDIIHTMSDTFKLLPSDKRLQWVQKLRDESHRYAINFHRSTKIKNMKQIALLKEKGIGEASVKKLLDYFGSFEAIEKASEQEKNAVLKKRN.

A GIY-YIG domain is found at 13 to 99; sequence NGSGVYQYFD…IKQLKPKYNI (87 aa). Positions 205–240 constitute a UVR domain; the sequence is DKLIKELQLKMDRLSSNLRFEEALIYRDRISKIQKI.

It belongs to the UvrC family. Interacts with UvrB in an incision complex.

It is found in the cytoplasm. Its function is as follows. The UvrABC repair system catalyzes the recognition and processing of DNA lesions. UvrC both incises the 5' and 3' sides of the lesion. The N-terminal half is responsible for the 3' incision and the C-terminal half is responsible for the 5' incision. This is UvrABC system protein C from Helicobacter acinonychis (strain Sheeba).